A 623-amino-acid polypeptide reads, in one-letter code: Translation initiation factor IF-2 (623 aa).

Low complexity predominate over residues 1–18 (MTLNKKTNNENSSKTTPK). Disordered regions lie at residues 1–21 (MTLNKKTNNENSSKTTPKLSK) and 92–115 (PQKEQTPPQLQPQKPPLTKSKLQA). Positions 125-293 (KTPPIVTIMG…ILLFSEIQNL (169 aa)) constitute a tr-type G domain. Residues 134–141 (GHVDHGKT) are G1. A GTP-binding site is contributed by 134 to 141 (GHVDHGKT). A G2 region spans residues 159–163 (GITQH). Positions 180–183 (DTPG) are G3. GTP contacts are provided by residues 180–184 (DTPGH) and 234–237 (NKVD). The tract at residues 234 to 237 (NKVD) is G4. Residues 270-272 (SAL) form a G5 region.

It belongs to the TRAFAC class translation factor GTPase superfamily. Classic translation factor GTPase family. IF-2 subfamily.

Its subcellular location is the cytoplasm. In terms of biological role, one of the essential components for the initiation of protein synthesis. Protects formylmethionyl-tRNA from spontaneous hydrolysis and promotes its binding to the 30S ribosomal subunits. Also involved in the hydrolysis of GTP during the formation of the 70S ribosomal complex. The polypeptide is Translation initiation factor IF-2 (Aster yellows witches'-broom phytoplasma (strain AYWB)).